The sequence spans 470 residues: D-serine/D-alanine/glycine transporter (470 aa).

The next 12 membrane-spanning stretches (helical) occupy residues 30–50 (LIAIGGAIGTGLFMGSGKTIS), 51–71 (LAGPSIIFVYMIIGFMLFFVM), 102–122 (FTGWTYWFCWVVTGMADVVAI), 137–157 (VASLAVIVLLLTLNLATVKMF), 162–182 (FWFAMIKIVAIVSLIVVGLVM), 211–231 (LSGFFAGFQIAVFAFVGIELV), 256–276 (IIMFYVFALIVIMSVTPWSSV), 283–303 (FVELFVLVGLPAAASVINFVV), 350–370 (FSCICLLGGVVMLYVNPSVIG), 371–391 (AFTMITTVSAILFMFVWTIIL), 413–433 (PLGKLMCWVCMAFFVFVVVLL), and 441–461 (QALLVTPLWFIALGLGWLFIG).

It belongs to the amino acid-polyamine-organocation (APC) superfamily. Amino acid transporter (AAT) (TC 2.A.3.1) family.

It localises to the cell inner membrane. It carries out the reaction D-alanine(in) + H(+)(in) = D-alanine(out) + H(+)(out). The catalysed reaction is D-serine(out) + H(+)(out) = D-serine(in) + H(+)(in). The enzyme catalyses glycine(in) + H(+)(in) = glycine(out) + H(+)(out). In terms of biological role, permease that is involved in the transport across the cytoplasmic membrane of D-alanine, D-serine and glycine. The protein is D-serine/D-alanine/glycine transporter (cycA) of Escherichia coli O157:H7.